The chain runs to 1395 residues: G-protein coupled receptor-associated sorting protein 1 (1395 aa).

3 disordered regions span residues 1-25, 45-83, and 269-288; these read MTGA…VVGG, QIMP…AKAI, and TNTW…FRSK. Residues 269–281 show a composition bias toward basic and acidic residues; sequence TNTWSGPREDPNS. S297 is subject to Phosphoserine. The segment at 446–469 is disordered; it reads SMGTGASSKSRPRTDGERIGDSLF. Residues 457-469 are compositionally biased toward basic and acidic residues; the sequence is PRTDGERIGDSLF. 2 positions are modified to phosphoserine: S631 and S899. Residues 899 to 1395 are OPRD1-binding; that stretch reads SETEEETIFG…QNDPEGDQEN (497 aa).

Belongs to the GPRASP family. Interacts with cytoplasmic tails of a variety of G-protein coupled receptors such as D2 dopamine receptor/DRD2, delta opioid receptor/OPRD1, beta-2 adrenergic receptor/ADRB2 and D4 dopamine receptor/DRD4. Interacts with PER1. Interacts with BECN2; the interaction is direct. Expressed in the brain, with lower expression in medulla, spinal cord and substantia nigra.

The protein resides in the cytoplasm. Modulates lysosomal sorting and functional down-regulation of a variety of G-protein coupled receptors. Targets receptors for degradation in lysosomes via its interaction with BECN2. The sequence is that of G-protein coupled receptor-associated sorting protein 1 (GPRASP1) from Homo sapiens (Human).